The following is a 123-amino-acid chain: Large ribosomal subunit protein uL14 (123 aa).

The protein belongs to the universal ribosomal protein uL14 family. As to quaternary structure, part of the 50S ribosomal subunit. Forms a cluster with proteins L3 and L19. In the 70S ribosome, L14 and L19 interact and together make contacts with the 16S rRNA in bridges B5 and B8.

In terms of biological role, binds to 23S rRNA. Forms part of two intersubunit bridges in the 70S ribosome. This is Large ribosomal subunit protein uL14 from Blochmanniella pennsylvanica (strain BPEN).